A 536-amino-acid polypeptide reads, in one-letter code: Light-independent protochlorophyllide reductase subunit B (536 aa).

Asp36 lines the [4Fe-4S] cluster pocket. The active-site Proton donor is Asp292. 427-428 contacts substrate; the sequence is GL. The span at 448–469 shows a compositional bias: low complexity; the sequence is SHLGHLGGHQSQTEQQQSQAAT. Positions 448–489 are disordered; that stretch reads SHLGHLGGHQSQTEQQQSQAATNPSTQSNADSSSEESPLWTP. A compositionally biased stretch (polar residues) spans 470–483; the sequence is NPSTQSNADSSSEE.

The protein belongs to the ChlB/BchB/BchZ family. Protochlorophyllide reductase is composed of three subunits; ChlL, ChlN and ChlB. Forms a heterotetramer of two ChlB and two ChlN subunits. Requires [4Fe-4S] cluster as cofactor.

It carries out the reaction chlorophyllide a + oxidized 2[4Fe-4S]-[ferredoxin] + 2 ADP + 2 phosphate = protochlorophyllide a + reduced 2[4Fe-4S]-[ferredoxin] + 2 ATP + 2 H2O. Its pathway is porphyrin-containing compound metabolism; chlorophyll biosynthesis (light-independent). In terms of biological role, component of the dark-operative protochlorophyllide reductase (DPOR) that uses Mg-ATP and reduced ferredoxin to reduce ring D of protochlorophyllide (Pchlide) to form chlorophyllide a (Chlide). This reaction is light-independent. The NB-protein (ChlN-ChlB) is the catalytic component of the complex. The chain is Light-independent protochlorophyllide reductase subunit B from Prochlorococcus marinus (strain MIT 9313).